Consider the following 608-residue polypeptide: Phosphogluconate dehydratase (608 aa).

[4Fe-4S] cluster contacts are provided by Cys154 and Cys221.

This sequence belongs to the IlvD/Edd family. It depends on [4Fe-4S] cluster as a cofactor.

The enzyme catalyses 6-phospho-D-gluconate = 2-dehydro-3-deoxy-6-phospho-D-gluconate + H2O. It participates in carbohydrate metabolism; Entner-Doudoroff pathway. Its function is as follows. Catalyzes the dehydration of 6-phospho-D-gluconate to 2-dehydro-3-deoxy-6-phospho-D-gluconate. The sequence is that of Phosphogluconate dehydratase from Pseudomonas aeruginosa (strain ATCC 15692 / DSM 22644 / CIP 104116 / JCM 14847 / LMG 12228 / 1C / PRS 101 / PAO1).